A 234-amino-acid polypeptide reads, in one-letter code: Purine nucleoside phosphorylase DeoD-type (234 aa).

H5 is an a purine D-ribonucleoside binding site. Phosphate contacts are provided by residues G21, R25, R44, and 88–91 (RIGS). A purine D-ribonucleoside-binding positions include 180–182 (EME) and 204–205 (SD). The active-site Proton donor is the D205.

This sequence belongs to the PNP/UDP phosphorylase family. As to quaternary structure, homohexamer; trimer of homodimers.

The catalysed reaction is a purine D-ribonucleoside + phosphate = a purine nucleobase + alpha-D-ribose 1-phosphate. The enzyme catalyses a purine 2'-deoxy-D-ribonucleoside + phosphate = a purine nucleobase + 2-deoxy-alpha-D-ribose 1-phosphate. Functionally, catalyzes the reversible phosphorolytic breakdown of the N-glycosidic bond in the beta-(deoxy)ribonucleoside molecules, with the formation of the corresponding free purine bases and pentose-1-phosphate. This Colwellia psychrerythraea (strain 34H / ATCC BAA-681) (Vibrio psychroerythus) protein is Purine nucleoside phosphorylase DeoD-type.